We begin with the raw amino-acid sequence, 133 residues long: MSQGPPAGGVLQSSVAAPGNQPQSPKDDDRKVRRREKNRVAAQRSRKKQTQKSDKLHEEHESLEQENSVLRREIAKLKEELRHLTEALKEHEKMCPLLLCPMNFVQLRPDPVASWSAHDAPDHPSFIWLGTLV.

The interval 1–68 is disordered; the sequence is MSQGPPAGGV…EHESLEQENS (68 aa). Phosphoserine is present on residues serine 2 and serine 24. Residues 11-24 show a composition bias toward polar residues; that stretch reads LQSSVAAPGNQPQS. In terms of domain architecture, bZIP spans 28–91; that stretch reads DDRKVRRREK…RHLTEALKEH (64 aa). The basic motif stretch occupies residues 30-55; the sequence is RKVRRREKNRVAAQRSRKKQTQKSDK. Residues 51-68 are compositionally biased toward basic and acidic residues; the sequence is QKSDKLHEEHESLEQENS. The tract at residues 56-84 is leucine-zipper; that stretch reads LHEEHESLEQENSVLRREIAKLKEELRHL.

The protein belongs to the bZIP family. In terms of assembly, heterodimer; heterodimerizes with JUN family proteins. Interacts with JUN. Ubiquitously expressed.

Its subcellular location is the nucleus. In terms of biological role, AP-1 family transcription factor that controls the differentiation of CD8(+) thymic conventional dendritic cells in the immune system. Acts via the formation of a heterodimer with JUN family proteins that recognizes and binds DNA sequence 5'-TGA[CG]TCA-3' and regulates expression of target genes. Required for development of CD8-alpha(+) classical dendritic cells (cDCs) and related CD103(+) dendritic cells that cross-present antigens to CD8 T-cells and produce interleukin-12 (IL12) in response to pathogens. The protein is Basic leucine zipper transcriptional factor ATF-like 3 (Batf3) of Rattus norvegicus (Rat).